A 287-amino-acid polypeptide reads, in one-letter code: Proteasome subunit alpha (287 aa).

The tract at residues 241–287 (GVVAGEEPHTAAHAPSVPQPGAPAGLGDPGAPDTGGTAGSGGEAPTT) is disordered. Over residues 262 to 275 (APAGLGDPGAPDTG) the composition is skewed to low complexity. Residues 276 to 287 (GTAGSGGEAPTT) are compositionally biased toward gly residues.

It belongs to the peptidase T1A family. As to quaternary structure, the 20S proteasome core is composed of 14 alpha and 14 beta subunits that assemble into four stacked heptameric rings, resulting in a barrel-shaped structure. The two inner rings, each composed of seven catalytic beta subunits, are sandwiched by two outer rings, each composed of seven alpha subunits. The catalytic chamber with the active sites is on the inside of the barrel. Has a gated structure, the ends of the cylinder being occluded by the N-termini of the alpha-subunits. Is capped by the proteasome-associated ATPase, ARC.

It localises to the cytoplasm. It functions in the pathway protein degradation; proteasomal Pup-dependent pathway. Its activity is regulated as follows. The formation of the proteasomal ATPase ARC-20S proteasome complex, likely via the docking of the C-termini of ARC into the intersubunit pockets in the alpha-rings, may trigger opening of the gate for substrate entry. Interconversion between the open-gate and close-gate conformations leads to a dynamic regulation of the 20S proteasome proteolysis activity. Component of the proteasome core, a large protease complex with broad specificity involved in protein degradation. The polypeptide is Proteasome subunit alpha (Geodermatophilus obscurus (strain ATCC 25078 / DSM 43160 / JCM 3152 / CCUG 61914 / KCC A-0152 / KCTC 9177 / NBRC 13315 / NRRL B-3577 / G-20)).